The sequence spans 85 residues: Large ribosomal subunit protein bL27 (85 aa).

It belongs to the bacterial ribosomal protein bL27 family.

The protein is Large ribosomal subunit protein bL27 of Pseudomonas aeruginosa (strain LESB58).